An 817-amino-acid chain; its full sequence is LisH domain-containing protein ARMC9 (817 aa).

The LisH domain maps to 7 to 39; that stretch reads HESELLGLVKEYLDFAEFEDTLKTFSKECKVKG. A coiled-coil region spans residues 204–230; it reads GPNSKELLQQLHQQLVEAERRAMTYLK. Serine 583 carries the post-translational modification Phosphoserine. 2 disordered regions span residues 637 to 659 and 761 to 817; these read RKGPASVQWSGDEPLRRPVTPGG and CKPQ…SIRK. Polar residues predominate over residues 765 to 774; that stretch reads VPSTPETVEQ. Positions 793-807 are enriched in low complexity; the sequence is PQQASRPASTASSTR. The segment covering 808-817 has biased composition (polar residues); that stretch reads GLHSSQSIRK.

As to quaternary structure, interacts with TOGARAM1, CCDC66, CEP104, CSPP1 and CEP290. Interacts with NDUFAF2.

The protein resides in the cytoplasm. It is found in the cytoskeleton. Its subcellular location is the cilium basal body. It localises to the cell projection. The protein localises to the cilium. The protein resides in the microtubule organizing center. It is found in the centrosome. Its subcellular location is the centriole. Involved in ciliogenesis. It is required for appropriate acetylation and polyglutamylation of ciliary microtubules, and regulation of cilium length. Acts as a positive regulator of hedgehog (Hh) signaling. May participate in the trafficking and/or retention of GLI2 and GLI3 proteins at the ciliary tip. The sequence is that of LisH domain-containing protein ARMC9 from Mus musculus (Mouse).